The chain runs to 741 residues: Catalase-peroxidase (741 aa).

Positions 1 to 21 (MRNFRRFTIALLVLFLGPIGA) are cleaved as a signal peptide. Residues 109–231 (WHSAGTYRIS…LAAVQMGLIY (123 aa)) constitute a cross-link (tryptophyl-tyrosyl-methioninium (Trp-Tyr) (with M-257)). His110 serves as the catalytic Proton acceptor. The tryptophyl-tyrosyl-methioninium (Tyr-Met) (with W-109) cross-link spans 231–257 (YVNPEGPNGNPDPLAAAKDIRETFGRM). Position 272 (His272) interacts with heme b.

It belongs to the peroxidase family. Peroxidase/catalase subfamily. As to quaternary structure, homodimer or homotetramer. The cofactor is heme b. In terms of processing, formation of the three residue Trp-Tyr-Met cross-link is important for the catalase, but not the peroxidase activity of the enzyme.

It carries out the reaction H2O2 + AH2 = A + 2 H2O. It catalyses the reaction 2 H2O2 = O2 + 2 H2O. Functionally, bifunctional enzyme with both catalase and broad-spectrum peroxidase activity. The sequence is that of Catalase-peroxidase from Leptospira biflexa serovar Patoc (strain Patoc 1 / Ames).